The chain runs to 384 residues: FAD-dependent urate hydroxylase (384 aa).

Residues Gly11, 30–31 (EA), Ser43, and Val125 each bind FAD. Substrate contacts are provided by residues Asn178, Arg204, and 216–218 (YFF). Residues Asp285 and 295–299 (GQGGC) contribute to the FAD site.

The protein belongs to the FAD-dependent urate hydroxylase family. FAD serves as cofactor.

It catalyses the reaction urate + NADH + O2 + H(+) = 5-hydroxyisourate + NAD(+) + H2O. It participates in purine metabolism; urate degradation. Functionally, catalyzes the hydroxylation of uric acid to 5-hydroxyisourate. This chain is FAD-dependent urate hydroxylase (hpxO), found in Klebsiella oxytoca.